Consider the following 193-residue polypeptide: Pyridoxal 5'-phosphate synthase subunit PdxT (193 aa).

An L-glutamine-binding site is contributed by 48 to 50 (GES). Cysteine 80 functions as the Nucleophile in the catalytic mechanism. Residues arginine 109 and 137 to 138 (IR) contribute to the L-glutamine site. Residues histidine 173 and glutamate 175 each act as charge relay system in the active site.

It belongs to the glutaminase PdxT/SNO family. As to quaternary structure, in the presence of PdxS, forms a dodecamer of heterodimers. Only shows activity in the heterodimer.

It catalyses the reaction aldehydo-D-ribose 5-phosphate + D-glyceraldehyde 3-phosphate + L-glutamine = pyridoxal 5'-phosphate + L-glutamate + phosphate + 3 H2O + H(+). The enzyme catalyses L-glutamine + H2O = L-glutamate + NH4(+). It participates in cofactor biosynthesis; pyridoxal 5'-phosphate biosynthesis. Its function is as follows. Catalyzes the hydrolysis of glutamine to glutamate and ammonia as part of the biosynthesis of pyridoxal 5'-phosphate. The resulting ammonia molecule is channeled to the active site of PdxS. The chain is Pyridoxal 5'-phosphate synthase subunit PdxT from Mycobacteroides abscessus (strain ATCC 19977 / DSM 44196 / CCUG 20993 / CIP 104536 / JCM 13569 / NCTC 13031 / TMC 1543 / L948) (Mycobacterium abscessus).